The chain runs to 163 residues: Beta-lactoglobulin-2 (163 aa).

2 cysteine pairs are disulfide-bonded: Cys66–Cys161 and Cys106–Cys120.

The protein belongs to the calycin superfamily. Lipocalin family. As to quaternary structure, monomer.

It is found in the secreted. In terms of biological role, lactoglobulin is the primary component of whey, it binds retinol and is probably involved in the transport of that molecule. This is Beta-lactoglobulin-2 (LGB2) from Equus asinus (Donkey).